Here is a 126-residue protein sequence, read N- to C-terminus: uncharacterized protein (126 aa).

This is an uncharacterized protein from Archaeoglobus fulgidus (strain ATCC 49558 / DSM 4304 / JCM 9628 / NBRC 100126 / VC-16).